A 195-amino-acid polypeptide reads, in one-letter code: 3-isopropylmalate dehydratase small subunit (195 aa).

This sequence belongs to the LeuD family. LeuD type 1 subfamily. Heterodimer of LeuC and LeuD.

It catalyses the reaction (2R,3S)-3-isopropylmalate = (2S)-2-isopropylmalate. Its pathway is amino-acid biosynthesis; L-leucine biosynthesis; L-leucine from 3-methyl-2-oxobutanoate: step 2/4. In terms of biological role, catalyzes the isomerization between 2-isopropylmalate and 3-isopropylmalate, via the formation of 2-isopropylmaleate. This chain is 3-isopropylmalate dehydratase small subunit, found in Rubrobacter xylanophilus (strain DSM 9941 / JCM 11954 / NBRC 16129 / PRD-1).